The following is a 133-amino-acid chain: Transcription antitermination protein NusB (133 aa).

The protein belongs to the NusB family.

In terms of biological role, involved in transcription antitermination. Required for transcription of ribosomal RNA (rRNA) genes. Binds specifically to the boxA antiterminator sequence of the ribosomal RNA (rrn) operons. This Pediococcus pentosaceus (strain ATCC 25745 / CCUG 21536 / LMG 10740 / 183-1w) protein is Transcription antitermination protein NusB.